Reading from the N-terminus, the 519-residue chain is Threonine synthase, chloroplastic (519 aa).

Residues 1–40 (MAASCMLRSSFISPGLPQLHHQSTSKPNNGIHFFTPIKAT) constitute a chloroplast transit peptide. An N6-(pyridoxal phosphate)lysine modification is found at Lys196. Residues 328 to 332 (GNLGN) and Thr465 each bind pyridoxal 5'-phosphate.

It belongs to the threonine synthase family. As to quaternary structure, homodimer. It depends on pyridoxal 5'-phosphate as a cofactor.

It localises to the plastid. Its subcellular location is the chloroplast. The enzyme catalyses O-phospho-L-homoserine + H2O = L-threonine + phosphate. It functions in the pathway amino-acid biosynthesis; L-threonine biosynthesis; L-threonine from L-aspartate: step 5/5. Its activity is regulated as follows. Allosterically activated by S-adenosyl-methionine (SAM). Functionally, catalyzes the gamma-elimination of phosphate from L-phosphohomoserine and the beta-addition of water to produce L-threonine. This chain is Threonine synthase, chloroplastic, found in Solanum tuberosum (Potato).